Here is a 173-residue protein sequence, read N- to C-terminus: Thiol-disulfide oxidoreductase ResA (173 aa).

A helical; Signal-anchor for type II membrane protein transmembrane segment spans residues 10–29; that stretch reads VIILLILCGAVGFTLYQGYF. Residues 35–173 enclose the Thioredoxin domain; it reads MEIGKEAPNF…LEEYLKKITP (139 aa). The cysteines at positions 73 and 76 are disulfide-linked.

The protein belongs to the thioredoxin family. ResA subfamily.

It localises to the cell membrane. The protein operates within protein modification; cytochrome c assembly. Functionally, thiol-disulfide oxidoreductase which is required in disulfide reduction during c-type cytochrome synthesis. May accept reducing equivalents from CcdA, leading to breakage of disulfide bonds in apocytochrome c; following this reduction heme can be covalently attached. The protein is Thiol-disulfide oxidoreductase ResA of Bacillus thuringiensis subsp. konkukian (strain 97-27).